A 198-amino-acid polypeptide reads, in one-letter code: FMN-dependent NADH:quinone oxidoreductase (198 aa).

FMN contacts are provided by residues serine 10, serine 16 to serine 18, methionine 94 to phenylalanine 97, and threonine 138 to glycine 141.

This sequence belongs to the azoreductase type 1 family. As to quaternary structure, homodimer. It depends on FMN as a cofactor.

It carries out the reaction 2 a quinone + NADH + H(+) = 2 a 1,4-benzosemiquinone + NAD(+). The enzyme catalyses N,N-dimethyl-1,4-phenylenediamine + anthranilate + 2 NAD(+) = 2-(4-dimethylaminophenyl)diazenylbenzoate + 2 NADH + 2 H(+). Functionally, quinone reductase that provides resistance to thiol-specific stress caused by electrophilic quinones. Also exhibits azoreductase activity. Catalyzes the reductive cleavage of the azo bond in aromatic azo compounds to the corresponding amines. This Shewanella baltica (strain OS195) protein is FMN-dependent NADH:quinone oxidoreductase.